Reading from the N-terminus, the 374-residue chain is dTDP-3-amino-3,4,6-trideoxy-alpha-D-glucose transaminase (374 aa).

Residues Gly-60, Gln-160, 181 to 186, Tyr-214, Tyr-221, 229 to 231, and Tyr-316 contribute to the pyridoxal 5'-phosphate site; these read SFYPTK and NSR. The residue at position 186 (Lys-186) is an N6-(pyridoxal phosphate)lysine.

The protein belongs to the degT/dnrJ/eryC1 family. Pyridoxal 5'-phosphate is required as a cofactor.

The enzyme catalyses dTDP-3-amino-3,4,6-trideoxy-alpha-D-glucose + 2-oxoglutarate = dTDP-3-dehydro-4,6-dideoxy-alpha-D-glucose + L-glutamate. It participates in antibiotic biosynthesis. Functionally, involved in the biosynthesis of the amino sugar dTDP-L-megosamine which is found in the macrolide antibiotic and antiparasitic megalomicin A. Catalyzes the reversible transfer of the amino group from L-glutamate to the C-3 position of dTDP-3-keto-4,6-deoxyglucose to yield dTDP-3-amino-3,4,6-trideoxyglucose. This is dTDP-3-amino-3,4,6-trideoxy-alpha-D-glucose transaminase from Micromonospora megalomicea subsp. nigra.